Reading from the N-terminus, the 123-residue chain is uncharacterized protein (123 aa).

A helical transmembrane segment spans residues 5–25 (GTLVILFAIILILCIMLLFYY).

It belongs to the asfivirus CP123L family.

Its subcellular location is the host membrane. The protein localises to the virion. This is an uncharacterized protein from Ornithodoros (relapsing fever ticks).